The sequence spans 698 residues: Iron-sulfur clusters transporter ATM1, mitochondrial (698 aa).

A mitochondrion-targeting transit peptide spans Met1–Leu23. Residues Ser24–Arg113 lie on the Mitochondrial matrix side of the membrane. Residues Gly32 to Val63 form a disordered region. Positions Arg48–Ser61 are enriched in low complexity. A helical membrane pass occupies residues Val114 to Phe135. The ABC transmembrane type-1 domain occupies Val114–Gln404. The Mitochondrial intermembrane portion of the chain corresponds to Lys136 to Gly158. A helical membrane pass occupies residues Ala159–Phe182. Over Ala183–Ile231 the chain is Mitochondrial matrix. A helical transmembrane segment spans residues Leu232–Tyr255. Residue Asn256 is a topological domain, mitochondrial intermembrane. The chain crosses the membrane as a helical span at residues Tyr257 to Ile277. Topologically, residues Trp278–Ala343 are mitochondrial matrix. Glutathione is bound by residues Arg283 to Arg287 and Asn346 to Gln349. Residues Leu344–Tyr362 form a helical membrane-spanning segment. Residues Leu363–Asp377 lie on the Mitochondrial intermembrane side of the membrane. Residues Leu378–Tyr399 traverse the membrane as a helical segment. Position 396 (Gly396) interacts with glutathione. Residues Arg400 to Asn698 are Mitochondrial matrix-facing. The ABC transporter domain occupies Ile439–Ala675. Residues Tyr448 and Gly472 to Arg483 each bind ATP. Residues Met679 to Asn698 form a disordered region. Positions Glu682–Asn698 are enriched in basic and acidic residues.

Belongs to the ABC transporter superfamily. ABCB family. Heavy Metal importer (TC 3.A.1.210) subfamily. In terms of assembly, homodimer.

The protein localises to the mitochondrion inner membrane. Functionally, performs an essential function in the generation of cytoplasmic iron-sulfur proteins by mediating the ATP-dependent export of Fe/S cluster precursors synthesized by NFS1 and other mitochondrial proteins. Hydrolyzes ATP. Binds glutathione and may function by transporting a glutathione-conjugated iron-sulfur compound. The chain is Iron-sulfur clusters transporter ATM1, mitochondrial from Gibberella zeae (strain ATCC MYA-4620 / CBS 123657 / FGSC 9075 / NRRL 31084 / PH-1) (Wheat head blight fungus).